A 440-amino-acid polypeptide reads, in one-letter code: Chromosome partition protein MukF (440 aa).

Residues 208–236 (LSETSGTLRELQDTLEAAGDKLQANLLRI) form a leucine-zipper region.

Belongs to the MukF family. As to quaternary structure, interacts, and probably forms a ternary complex, with MukE and MukB via its C-terminal region. The complex formation is stimulated by calcium or magnesium. It is required for an interaction between MukE and MukB.

It localises to the cytoplasm. The protein localises to the nucleoid. Involved in chromosome condensation, segregation and cell cycle progression. May participate in facilitating chromosome segregation by condensation DNA from both sides of a centrally located replisome during cell division. Not required for mini-F plasmid partitioning. Probably acts via its interaction with MukB and MukE. Overexpression results in anucleate cells. It has a calcium binding activity. The chain is Chromosome partition protein MukF from Escherichia fergusonii (strain ATCC 35469 / DSM 13698 / CCUG 18766 / IAM 14443 / JCM 21226 / LMG 7866 / NBRC 102419 / NCTC 12128 / CDC 0568-73).